The following is a 1840-amino-acid chain: Sodium channel protein type 4 subunit alpha (1840 aa).

At 1–131 the chain is on the cytoplasmic side; that stretch reads MASSSLPNLV…RVAIKVLIHA (131 aa). The span at 36 to 60 shows a compositional bias: basic and acidic residues; the sequence is EARLQRNKQMEIEEPERKPRSDLEA. Residues 36–63 are disordered; the sequence is EARLQRNKQMEIEEPERKPRSDLEAGKN. Residues 113 to 448 form an I repeat; sequence LLSPFSIVRR…VVAMAYAEQN (336 aa). The helical transmembrane segment at 132–150 threads the bilayer; the sequence is LFSMFIMITILTNCVFMTM. The Extracellular portion of the chain corresponds to 151–157; that stretch reads SNPPSWS. A helical membrane pass occupies residues 158–178; the sequence is KHVEYTFTGIYTFESLIKMLA. Residues 179-192 lie on the Cytoplasmic side of the membrane; sequence RGFCIDDFTFLRDP. Residues 193–210 traverse the membrane as a helical segment; it reads WNWLDFSVITMAYVTEFV. Residues 211-216 are Extracellular-facing; sequence DLGNIS. A helical membrane pass occupies residues 217 to 233; the sequence is ALRTFRVLRALKTITVI. The Cytoplasmic segment spans residues 234–252; it reads PGLKTIVGALIQSVKKLSD. Residues 253–272 form a helical membrane-spanning segment; sequence VMILTVFCLSVFALVGLQLF. Over 273–385 the chain is Extracellular; the sequence is MGNLRQKCVR…PNYGYTSYDT (113 aa). Cysteines 280 and 354 form a disulfide. N-linked (GlcNAc...) asparagine glycans are attached at residues Asn-288, Asn-291, Asn-297, Asn-303, Asn-309, Asn-315, Asn-327, and Asn-356. Cysteines 363 and 369 form a disulfide. The segment at residues 386–410 is an intramembrane region (pore-forming); sequence FSWAFLALFRLMTQDYWENLFQLTL. The Extracellular portion of the chain corresponds to 411-417; it reads RAAGKTY. Residues 418–438 form a helical membrane-spanning segment; sequence MIFFVVIIFLGSFYLINLILA. The Cytoplasmic segment spans residues 439–572; it reads VVAMAYAEQN…HIIYLIVMDP (134 aa). A disordered region spans residues 481-522; that stretch reads AAQALESGEEADGDPTHNKDCNGSLDASGEKGPPRPSCSADS. Ser-487 is modified (phosphoserine). Residues 554-826 form an II repeat; sequence CCAPWVKFKH…QIAIGRIKWG (273 aa). The chain crosses the membrane as a helical span at residues 573–591; it reads FVDLGITICIVLNTLFMAM. At 592 to 602 the chain is on the extracellular side; that stretch reads EHYPMTEHFDN. The chain crosses the membrane as a helical span at residues 603-622; that stretch reads VLSVGNLVFTGIFTAEMVLK. At 623–636 the chain is on the cytoplasmic side; it reads LIAMDPYEYFQQGW. The helical transmembrane segment at 637–656 threads the bilayer; that stretch reads NIFDSFIVTLSLVELGLANV. Over 657-658 the chain is Extracellular; it reads QG. The helical transmembrane segment at 659–676 threads the bilayer; that stretch reads LSVLRSFRLLRVFKLAKS. The Cytoplasmic portion of the chain corresponds to 677-692; the sequence is WPTLNMLIKIIGNSVG. Residues 693–711 form a helical membrane-spanning segment; that stretch reads ALGNLTLVLAIIVFIFAVV. Residues 712 to 740 lie on the Extracellular side of the membrane; the sequence is GMQLFGKSYKECVCKIASDCNLPRWHMND. Cys-725 and Cys-731 form a disulfide bridge. The pore-forming intramembrane region spans 741–761; sequence FFHSFLIVFRILCGEWIETMW. Topologically, residues 762–772 are extracellular; that stretch reads DCMEVAGQAMC. Cysteines 763 and 772 form a disulfide. Residues 773-791 traverse the membrane as a helical segment; the sequence is LTVFLMVMVIGNLVVLNLF. The Cytoplasmic segment spans residues 792–1025; that stretch reads LALLLSSFSA…ACFKIVEHNW (234 aa). Disordered regions lie at residues 854–884 and 925–983; these read EPGG…LKDN and DLEM…GEQP. The span at 868–884 shows a compositional bias: basic and acidic residues; it reads EDEKKEPPPEDKELKDN. 2 stretches are compositionally biased toward acidic residues: residues 925 to 940 and 968 to 983; these read DLEM…FSEP and EDPE…GEQP. One copy of the III repeat lies at 1006-1319; the sequence is RGKMWWTLRR…KKYYNAMKKL (314 aa). The chain crosses the membrane as a helical span at residues 1026-1043; sequence FETFIVFMILLSSGALAF. The Extracellular segment spans residues 1044-1056; it reads EDIYIEQRRVIRT. Residues 1057–1075 form a helical membrane-spanning segment; that stretch reads ILEYADKVFTYIFILEMLL. Residues 1076-1089 lie on the Cytoplasmic side of the membrane; it reads KWVAYGFKVYFTNA. A helical membrane pass occupies residues 1090-1108; it reads WCWLDFLIVDVSIISLVAN. The Extracellular portion of the chain corresponds to 1109–1116; the sequence is WLGYSELG. A helical transmembrane segment spans residues 1117-1135; the sequence is PIKSLRTLRALRPLRALSR. Residues 1136–1152 lie on the Cytoplasmic side of the membrane; the sequence is FEGMRVVVNALLGAIPS. A helical transmembrane segment spans residues 1153–1172; the sequence is IMNVLLVCLIFWLIFSIMGV. The Extracellular portion of the chain corresponds to 1173–1223; it reads NLFAGKFYYCVNTTTSERFDISVVNNKSESESLMYTGQVRWMNVKVNYDNV. An N-linked (GlcNAc...) asparagine glycan is attached at Asn-1198. The segment at residues 1224 to 1245 is an intramembrane region (pore-forming); that stretch reads GLGYLSLLQVATFKGWMDIMYA. At 1246-1262 the chain is on the extracellular side; sequence AVDSREKEEQPHYEVNL. The helical transmembrane segment at 1263–1284 threads the bilayer; it reads YMYLYFVIFIIFGSFFTLNLFI. The Cytoplasmic portion of the chain corresponds to 1285-1347; sequence GVIIDNFNQQ…MVYDFVTKQV (63 aa). The interval 1303 to 1305 is important for rapid channel inactivation; sequence IFM. An IV repeat occupies 1328 to 1626; that stretch reads IPRPQNKIQG…WEKFDPDATQ (299 aa). The helical transmembrane segment at 1348 to 1365 threads the bilayer; the sequence is FDISIMILICLNMVTMMV. Over 1366-1376 the chain is Extracellular; sequence ETDDQSQLKVD. The helical transmembrane segment at 1377–1395 threads the bilayer; it reads ILYNINMVFIIIFTGECVL. Topologically, residues 1396-1407 are cytoplasmic; it reads KMFALRHYYFTI. The chain crosses the membrane as a helical span at residues 1408 to 1425; sequence GWNIFDFVVVILSIVGLA. At 1426–1438 the chain is on the extracellular side; sequence LSDLIQKYFVSPT. Residues 1439–1455 form a helical membrane-spanning segment; sequence LFRVIRLARIGRVLRLI. The Cytoplasmic segment spans residues 1456 to 1474; the sequence is RGAKGIRTLLFALMMSLPA. The chain crosses the membrane as a helical span at residues 1475–1492; the sequence is LFNIGLLLFLVMFIYSIF. Residues 1493–1514 are Extracellular-facing; the sequence is GMSNFAYVKKESGIDDMFNFET. The segment at residues 1515-1537 is an intramembrane region (pore-forming); that stretch reads FGNSIICLFEITTSAGWDGLLNP. The Extracellular segment spans residues 1538 to 1567; that stretch reads ILNSGPPDCDPTLENPGTNVRGDCGNPSIG. A disulfide bridge links Cys-1546 with Cys-1561. The chain crosses the membrane as a helical span at residues 1568–1590; sequence ICFFCSYIIISFLIVVNMYIAII. Residues 1591-1840 are Cytoplasmic-facing; that stretch reads LENFNVATEE…VRPGVKESLV (250 aa). Positions 1720–1749 constitute an IQ domain; it reads EEVCAIKIQRAYRRHLLQRSVKQASYMYRH. Residues 1775 to 1840 form a disordered region; it reads HEKEGDGVQS…VRPGVKESLV (66 aa). Over residues 1804–1813 the composition is skewed to low complexity; sequence PTSSSDTALT. Pro residues predominate over residues 1814–1824; that stretch reads PSPPPLPPSSS.

The protein belongs to the sodium channel (TC 1.A.1.10) family. Nav1.4/SCN4A subfamily. In terms of assembly, the Nav1.4 voltage-gated sodium channel consists of an ion-conducting alpha subunit SCN4A which is functional on its own and a regulatory beta subunit SCN1B. SCN1B strongly enhances the presence of SCN4A at the cell surface. SCN1B is also required for rapid channel inactivation and recovery after inactivation. It prevents the decrease of channel activity in response to repetitive, high-frequency depolarizations. Interacts with the syntrophins SNTA1, SNTB1 and SNTB2 (via PDZ domain); probably links SCN4A to the actin cytoskeleton and the extracellular matrix via the dystrophin-associated protein complex and regulates its localization in muscle cells. Interacts with TMEM233; probable regulator of the channel. As to expression, detected in skeletal muscle.

It is found in the cell membrane. The enzyme catalyses Na(+)(in) = Na(+)(out). Potently inhibited by tetrodotoxin and saxitoxin. Inhibited by the conotoxin GVIIJ. Functionally, pore-forming subunit of Nav1.4, a voltage-gated sodium (Nav) channel that directly mediates the depolarizing phase of action potentials in excitable membranes. Navs, also called VGSCs (voltage-gated sodium channels) or VDSCs (voltage-dependent sodium channels), operate by switching between closed and open conformations depending on the voltage difference across the membrane. In the open conformation they allow Na(+) ions to selectively pass through the pore, along their electrochemical gradient. The influx of Na+ ions provokes membrane depolarization, initiating the propagation of electrical signals throughout cells and tissues. Highly expressed in skeletal muscles, Nav1.4 generates the action potential crucial for muscle contraction. The sequence is that of Sodium channel protein type 4 subunit alpha from Rattus norvegicus (Rat).